Consider the following 176-residue polypeptide: Urease accessory protein UreE (176 aa).

Residues 147–176 are disordered; sequence AGAYQQGGGHSHGHAHSHSHEKPHSHTHNH.

The protein belongs to the UreE family.

Its subcellular location is the cytoplasm. Its function is as follows. Involved in urease metallocenter assembly. Binds nickel. Probably functions as a nickel donor during metallocenter assembly. The protein is Urease accessory protein UreE of Alcanivorax borkumensis (strain ATCC 700651 / DSM 11573 / NCIMB 13689 / SK2).